The following is a 255-amino-acid chain: Pyridoxine 5'-phosphate synthase (255 aa).

Residues N8 and R19 each contribute to the 3-amino-2-oxopropyl phosphate site. H44 (proton acceptor) is an active-site residue. The 1-deoxy-D-xylulose 5-phosphate site is built by R46 and H51. E74 functions as the Proton acceptor in the catalytic mechanism. T111 is a 1-deoxy-D-xylulose 5-phosphate binding site. H202 (proton donor) is an active-site residue. 3-amino-2-oxopropyl phosphate is bound by residues D203 and 225-226; that span reads GH.

The protein belongs to the PNP synthase family. Homooctamer; tetramer of dimers.

It is found in the cytoplasm. It catalyses the reaction 3-amino-2-oxopropyl phosphate + 1-deoxy-D-xylulose 5-phosphate = pyridoxine 5'-phosphate + phosphate + 2 H2O + H(+). The protein operates within cofactor biosynthesis; pyridoxine 5'-phosphate biosynthesis; pyridoxine 5'-phosphate from D-erythrose 4-phosphate: step 5/5. Catalyzes the complicated ring closure reaction between the two acyclic compounds 1-deoxy-D-xylulose-5-phosphate (DXP) and 3-amino-2-oxopropyl phosphate (1-amino-acetone-3-phosphate or AAP) to form pyridoxine 5'-phosphate (PNP) and inorganic phosphate. The sequence is that of Pyridoxine 5'-phosphate synthase from Xanthomonas oryzae pv. oryzae (strain MAFF 311018).